A 283-amino-acid polypeptide reads, in one-letter code: Phosphatidylserine decarboxylase proenzyme (283 aa).

Catalysis depends on charge relay system; for autoendoproteolytic cleavage activity residues Asp-88, His-145, and Ser-248. Residue Ser-248 is the Schiff-base intermediate with substrate; via pyruvic acid; for decarboxylase activity of the active site. The residue at position 248 (Ser-248) is a Pyruvic acid (Ser); by autocatalysis.

This sequence belongs to the phosphatidylserine decarboxylase family. PSD-B subfamily. Prokaryotic type I sub-subfamily. As to quaternary structure, heterodimer of a large membrane-associated beta subunit and a small pyruvoyl-containing alpha subunit. Pyruvate is required as a cofactor. Post-translationally, is synthesized initially as an inactive proenzyme. Formation of the active enzyme involves a self-maturation process in which the active site pyruvoyl group is generated from an internal serine residue via an autocatalytic post-translational modification. Two non-identical subunits are generated from the proenzyme in this reaction, and the pyruvate is formed at the N-terminus of the alpha chain, which is derived from the carboxyl end of the proenzyme. The autoendoproteolytic cleavage occurs by a canonical serine protease mechanism, in which the side chain hydroxyl group of the serine supplies its oxygen atom to form the C-terminus of the beta chain, while the remainder of the serine residue undergoes an oxidative deamination to produce ammonia and the pyruvoyl prosthetic group on the alpha chain. During this reaction, the Ser that is part of the protease active site of the proenzyme becomes the pyruvoyl prosthetic group, which constitutes an essential element of the active site of the mature decarboxylase.

The protein resides in the cell membrane. The enzyme catalyses a 1,2-diacyl-sn-glycero-3-phospho-L-serine + H(+) = a 1,2-diacyl-sn-glycero-3-phosphoethanolamine + CO2. It participates in phospholipid metabolism; phosphatidylethanolamine biosynthesis; phosphatidylethanolamine from CDP-diacylglycerol: step 2/2. Its function is as follows. Catalyzes the formation of phosphatidylethanolamine (PtdEtn) from phosphatidylserine (PtdSer). The polypeptide is Phosphatidylserine decarboxylase proenzyme (Variovorax paradoxus (strain S110)).